Here is a 414-residue protein sequence, read N- to C-terminus: Secernin-1 (414 aa).

This sequence belongs to the peptidase C69 family. Secernin subfamily.

The protein localises to the cytoplasm. In terms of biological role, regulates exocytosis in mast cells. Increases both the extent of secretion and the sensitivity of mast cells to stimulation with calcium. The chain is Secernin-1 (Scrn1) from Mus musculus (Mouse).